A 181-amino-acid polypeptide reads, in one-letter code: Oligoribonuclease (181 aa).

Positions 8 to 171 (LIWIDLEMTG…DDIRESVGEL (164 aa)) constitute an Exonuclease domain. The active site involves Tyr129.

The protein belongs to the oligoribonuclease family.

It is found in the cytoplasm. Functionally, 3'-to-5' exoribonuclease specific for small oligoribonucleotides. The chain is Oligoribonuclease from Serratia proteamaculans (strain 568).